A 534-amino-acid polypeptide reads, in one-letter code: Serine/threonine-protein kinase Nek6 (534 aa).

The Protein kinase domain occupies Tyr4–Leu257. ATP contacts are provided by residues Ile10–Ala18 and Lys33. Residue Asp129 is the Proton acceptor of the active site. 2 disordered regions span residues Lys278 to Ala306 and Lys425 to Lys449.

Belongs to the protein kinase superfamily. NEK Ser/Thr protein kinase family. NIMA subfamily. In terms of assembly, interacts with DIS1. Ubiquitinated by the E3 ligase DIS1. Ubiquitination of NEK6 leads to its degradation via the 26S proteasome-dependent pathway. Expressed in anthers, pistils and leaves.

It is found in the cytoplasm. It catalyses the reaction L-seryl-[protein] + ATP = O-phospho-L-seryl-[protein] + ADP + H(+). It carries out the reaction L-threonyl-[protein] + ATP = O-phospho-L-threonyl-[protein] + ADP + H(+). Its function is as follows. May be involved in plant development processes. In Oryza sativa subsp. japonica (Rice), this protein is Serine/threonine-protein kinase Nek6.